A 1029-amino-acid chain; its full sequence is Putative guanine nucleotide-exchange factor SED4 (1029 aa).

At 1-344 (MVFDSEYDLG…AMGGSNLWKS (344 aa)) the chain is on the cytoplasmic side. 2 WD repeats span residues 257-296 (KDYK…VIKL) and 300-339 (VHKD…MGGS). The chain crosses the membrane as a helical; Signal-anchor for type II membrane protein span at residues 345–365 (LLRFLFNVMKLAVVVIWAHLF). Residues 366-1029 (YKYDLHHKLY…TQHNVINDEL (664 aa)) lie on the Lumenal side of the membrane. An N-linked (GlcNAc...) asparagine glycan is attached at Asn-579. Residues 579–592 (NASTSISIEESTNS) show a composition bias toward low complexity. Disordered stretches follow at residues 579–673 (NAST…NSIV), 710–732 (VVDE…VGSI), and 747–821 (EAVK…SQIS). Positions 593-603 (HSTFIESSSSL) are enriched in polar residues. A glycan (N-linked (GlcNAc...) asparagine) is linked at Asn-608. Over residues 613-628 (SSREISSETSIIKEDM) the composition is skewed to basic and acidic residues. Positions 633–642 (ENVSEQSATD) are enriched in polar residues. Residues Asn-634 and Asn-647 are each glycosylated (N-linked (GlcNAc...) asparagine). A compositionally biased stretch (basic and acidic residues) spans 643 to 654 (KVNKNQSIDKID). The span at 655–672 (VSSSSSIPTSSEGSSNSI) shows a compositional bias: low complexity. Residues 712-722 (DENHSESKLPT) show a composition bias toward basic and acidic residues. N-linked (GlcNAc...) asparagine glycosylation is found at Asn-714, Asn-754, Asn-774, Asn-792, Asn-806, Asn-855, Asn-865, Asn-874, Asn-884, and Asn-966. Polar residues-rich tracts occupy residues 750-762 (KTSS…SQVT) and 771-782 (RVSNQSLSTVST). Basic and acidic residues predominate over residues 783–799 (EHTEMKESSNLTEKKPE). Positions 800–812 (SNSPESNLSESSL) are enriched in low complexity. Residues 858–867 (LVDSQSSNSS) are compositionally biased toward low complexity. Disordered stretches follow at residues 858-886 (LVDS…QNET), 963-982 (TPEN…FMTE), and 1003-1029 (VAQQ…NDEL). A compositionally biased stretch (polar residues) spans 868 to 886 (VKTVETNVSQDEQTSQNET). Residues 1026–1029 (NDEL) carry the Prevents secretion from ER motif.

It belongs to the WD repeat SEC12 family.

It is found in the endoplasmic reticulum membrane. The protein localises to the golgi apparatus membrane. Functionally, putative guanine nucleotide-exchange factor (GEF) involved in the formation or budding of transport vesicles from the ER. Positive regulator of SAR1 probably through inhibition of the GTPase activation by SEC23. The chain is Putative guanine nucleotide-exchange factor SED4 (SED4) from Candida glabrata (strain ATCC 2001 / BCRC 20586 / JCM 3761 / NBRC 0622 / NRRL Y-65 / CBS 138) (Yeast).